The chain runs to 250 residues: Cell division protein ZapD (250 aa).

It belongs to the ZapD family. Interacts with FtsZ.

Its subcellular location is the cytoplasm. Functionally, cell division factor that enhances FtsZ-ring assembly. Directly interacts with FtsZ and promotes bundling of FtsZ protofilaments, with a reduction in FtsZ GTPase activity. The chain is Cell division protein ZapD from Yersinia pestis bv. Antiqua (strain Antiqua).